An 867-amino-acid polypeptide reads, in one-letter code: GRB2-associated and regulator of MAPK protein 1 (867 aa).

The tract at residues 12–322 (NNITWSTTTL…GLLQGESWFE (311 aa)) is CABIT. A Phosphotyrosine modification is found at Y464. Disordered stretches follow at residues 511–530 (SADV…AVKE), 536–594 (DAPP…QIES), and 735–758 (PPRT…TADA). Composition is skewed to polar residues over residues 544 to 554 (SSKQAGSSSAT) and 569 to 581 (SPSP…SSGL). A compositionally biased stretch (basic and acidic residues) spans 740–749 (KCTDAKKDAE). One can recognise an SAM domain in the interval 802 to 867 (ISIEEISKSL…QFINGWRPKM (66 aa)).

This sequence belongs to the GAREM family.

Functionally, adapter protein that may provide a link between cell surface epidermal growth factor receptor and the MAPK/ERK signaling pathway. May promote cell proliferation. This chain is GRB2-associated and regulator of MAPK protein 1 (garem1), found in Danio rerio (Zebrafish).